The sequence spans 512 residues: tRNA-guanine(15) transglycosylase (512 aa).

The active-site Nucleophile is the Asp85. Asp120 is a binding site for substrate. Residues Cys272, Cys274, and Cys277 each coordinate Zn(2+).

Belongs to the archaeosine tRNA-ribosyltransferase family. The cofactor is Zn(2+).

It catalyses the reaction guanosine(15) in tRNA + 7-cyano-7-deazaguanine = 7-cyano-7-carbaguanosine(15) in tRNA + guanine. It functions in the pathway tRNA modification; archaeosine-tRNA biosynthesis. Its function is as follows. Exchanges the guanine residue with 7-cyano-7-deazaguanine (preQ0) at position 15 in the dihydrouridine loop (D-loop) of archaeal tRNAs. The polypeptide is tRNA-guanine(15) transglycosylase (Aeropyrum pernix (strain ATCC 700893 / DSM 11879 / JCM 9820 / NBRC 100138 / K1)).